Consider the following 20-residue polypeptide: Fibrinogen (20 aa).

A Vitellogenin domain is found at 1–20 (LHSNLEYQYRYSGRVASGIP).

In terms of tissue distribution, secreted into the hemolymph.

The protein localises to the secreted. Its subcellular location is the extracellular space. Involved in lipid transport. Plays a role in hemolymph clotting. May be involved in wound healing in the cuticle. The protein is Fibrinogen of Pacifastacus leniusculus (Signal crayfish).